Consider the following 86-residue polypeptide: Protein Tat (86 aa).

Residues 1-21 (MDPVDPNLEPWNHPGSQPKTA) form a disordered region. Positions 1–24 (MDPVDPNLEPWNHPGSQPKTACNR) are interaction with human CREBBP. The tract at residues 1 to 48 (MDPVDPNLEPWNHPGSQPKTACNRCHCKKCCYHCQVCFITKGLGISYG) is transactivation. Residues Cys-22, Cys-25, and Cys-27 each contribute to the Zn(2+) site. Residues 22 to 37 (CNRCHCKKCCYHCQVC) form a cysteine-rich region. Lys-28 carries the post-translational modification N6-acetyllysine; by host PCAF. The Zn(2+) site is built by Cys-30, His-33, Cys-34, and Cys-37. The interval 38–48 (FITKGLGISYG) is core. The segment at 47-86 (YGRKKRRQRRRPSQGGQTHQDPIPKQPSSQPRGNPTGPKE) is disordered. Residues 48 to 58 (GRKKRRQRRRP) are compositionally biased toward basic residues. The Nuclear localization signal, RNA-binding (TAR), and protein transduction signature appears at 49–57 (RKKRRQRRR). Positions 49-86 (RKKRRQRRRPSQGGQTHQDPIPKQPSSQPRGNPTGPKE) are interaction with the host capping enzyme RNGTT. An N6-acetyllysine; by host EP300 and GCN5L2 mark is found at Lys-50 and Lys-51. Residues Arg-52 and Arg-53 each carry the asymmetric dimethylarginine; by host PRMT6 modification. Polar residues predominate over residues 60 to 79 (QGGQTHQDPIPKQPSSQPRG). Residue Lys-71 forms a Glycyl lysine isopeptide (Lys-Gly) (interchain with G-Cter in ubiquitin) linkage.

This sequence belongs to the lentiviruses Tat family. Interacts with host CCNT1. Associates with the P-TEFb complex composed at least of Tat, P-TEFb (CDK9 and CCNT1), TAR RNA, RNA Pol II. Recruits the HATs CREBBP, TAF1/TFIID, EP300, PCAF and GCN5L2. Interacts with host KAT5/Tip60; this interaction targets the latter to degradation. Interacts with the host deacetylase SIRT1. Interacts with host capping enzyme RNGTT; this interaction stimulates RNGTT. Binds to host KDR, and to the host integrins ITGAV/ITGB3 and ITGA5/ITGB1. Interacts with host KPNB1/importin beta-1 without previous binding to KPNA1/importin alpha-1. Interacts with EIF2AK2. Interacts with host nucleosome assembly protein NAP1L1; this interaction may be required for the transport of Tat within the nucleus, since the two proteins interact at the nuclear rim. Interacts with host C1QBP/SF2P32; this interaction involves lysine-acetylated Tat. Interacts with the host chemokine receptors CCR2, CCR3 and CXCR4. Interacts with host DPP4/CD26; this interaction may trigger an anti-proliferative effect. Interacts with host LDLR. Interacts with the host extracellular matrix metalloproteinase MMP1. Interacts with host PRMT6; this interaction mediates Tat's methylation. Interacts with, and is ubiquitinated by MDM2/Hdm2. Interacts with host PSMC3 and HTATIP2. Interacts with STAB1; this interaction may overcome SATB1-mediated repression of IL2 and IL2RA (interleukin) in T cells by binding to the same domain than HDAC1. Interacts (when acetylated) with human CDK13, thereby increasing HIV-1 mRNA splicing and promoting the production of the doubly spliced HIV-1 protein Nef. Interacts with host TBP; this interaction modulates the activity of transcriptional pre-initiation complex. Interacts with host RELA. Interacts with host PLSCR1; this interaction negatively regulates Tat transactivation activity by altering its subcellular distribution. In terms of processing, asymmetrical arginine methylation by host PRMT6 seems to diminish the transactivation capacity of Tat and affects the interaction with host CCNT1. Acetylation by EP300, CREBBP, GCN5L2/GCN5 and PCAF regulates the transactivation activity of Tat. EP300-mediated acetylation of Lys-50 promotes dissociation of Tat from the TAR RNA through the competitive binding to PCAF's bromodomain. In addition, the non-acetylated Tat's N-terminus can also interact with PCAF. PCAF-mediated acetylation of Lys-28 enhances Tat's binding to CCNT1. Lys-50 is deacetylated by SIRT1. Post-translationally, polyubiquitination by host MDM2 does not target Tat to degradation, but activates its transactivation function and fosters interaction with CCNT1 and TAR RNA. In terms of processing, phosphorylated by EIF2AK2 on serine and threonine residues adjacent to the basic region important for TAR RNA binding and function. Phosphorylation of Tat by EIF2AK2 is dependent on the prior activation of EIF2AK2 by dsRNA.

The protein localises to the host nucleus. It is found in the host nucleolus. The protein resides in the host cytoplasm. It localises to the secreted. Its function is as follows. Transcriptional activator that increases RNA Pol II processivity, thereby increasing the level of full-length viral transcripts. Recognizes a hairpin structure at the 5'-LTR of the nascent viral mRNAs referred to as the transactivation responsive RNA element (TAR) and recruits the cyclin T1-CDK9 complex (P-TEFb complex) that will in turn hyperphosphorylate the RNA polymerase II to allow efficient elongation. The CDK9 component of P-TEFb and other Tat-activated kinases hyperphosphorylate the C-terminus of RNA Pol II that becomes stabilized and much more processive. Other factors such as HTATSF1/Tat-SF1, SUPT5H/SPT5, and HTATIP2 are also important for Tat's function. Besides its effect on RNA Pol II processivity, Tat induces chromatin remodeling of proviral genes by recruiting the histone acetyltransferases (HATs) CREBBP, EP300 and PCAF to the chromatin. This also contributes to the increase in proviral transcription rate, especially when the provirus integrates in transcriptionally silent region of the host genome. To ensure maximal activation of the LTR, Tat mediates nuclear translocation of NF-kappa-B by interacting with host RELA. Through its interaction with host TBP, Tat may also modulate transcription initiation. Tat can reactivate a latently infected cell by penetrating in it and transactivating its LTR promoter. In the cytoplasm, Tat is thought to act as a translational activator of HIV-1 mRNAs. Functionally, extracellular circulating Tat can be endocytosed by surrounding uninfected cells via the binding to several surface receptors such as CD26, CXCR4, heparan sulfate proteoglycans (HSPG) or LDLR. Neurons are rarely infected, but they internalize Tat via their LDLR. Through its interaction with nuclear HATs, Tat is potentially able to control the acetylation-dependent cellular gene expression. Modulates the expression of many cellular genes involved in cell survival, proliferation or in coding for cytokines or cytokine receptors. Tat plays a role in T-cell and neurons apoptosis. Tat induced neurotoxicity and apoptosis probably contribute to neuroAIDS. Circulating Tat also acts as a chemokine-like and/or growth factor-like molecule that binds to specific receptors on the surface of the cells, affecting many cellular pathways. In the vascular system, Tat binds to ITGAV/ITGB3 and ITGA5/ITGB1 integrins dimers at the surface of endothelial cells and competes with bFGF for heparin-binding sites, leading to an excess of soluble bFGF. This chain is Protein Tat, found in Homo sapiens (Human).